Consider the following 591-residue polypeptide: Mono(ADP-ribosyl)transferase SpvB (591 aa).

Positions 373–576 (PMMGGNSSRP…LRLSDDATAD (204 aa)) constitute a TR mART core domain. Residues arginine 414 and 471 to 477 (RGLKLDK) contribute to the NAD(+) site. Catalysis depends on residues arginine 471, serine 501, and glutamate 538. NAD(+) is bound at residue glutamate 538.

The protein belongs to the SpvB family.

It is found in the secreted. The catalysed reaction is L-arginyl-[protein] + NAD(+) = N(omega)-(ADP-D-ribosyl)-L-arginyl-[protein] + nicotinamide + H(+). With respect to regulation, inhibited by novobiocin. Mono-ADP-ribosylates eukaryotic muscle and non-muscle actin on 'Arg-177'. ADP-ribosylates all actins tested, has more activity on nonmuscle beta/gamma-actin than on muscle alpha-actin. Prefers monomeric G-actin but can weakly ADP-ribosylate F-actin. ADP-ribosylation prevents the polymerization of G-actin to F-actin, causing actin filament depolymerization, destruction of the cytoskeleton and cytotoxicity. Does not possess NAD(+)-glycohydrolase activity, unlike most mART enzymes. In Salmonella typhimurium, this protein is Mono(ADP-ribosyl)transferase SpvB (spvB).